Here is an 802-residue protein sequence, read N- to C-terminus: Leucine--tRNA ligase (802 aa).

Positions 40–51 (PYPSGAGLHVGH) match the 'HIGH' region motif. The short motif at 576–580 (KMSKS) is the 'KMSKS' region element. Position 579 (lysine 579) interacts with ATP.

Belongs to the class-I aminoacyl-tRNA synthetase family.

It localises to the cytoplasm. It carries out the reaction tRNA(Leu) + L-leucine + ATP = L-leucyl-tRNA(Leu) + AMP + diphosphate. In Bacillus mycoides (strain KBAB4) (Bacillus weihenstephanensis), this protein is Leucine--tRNA ligase.